Reading from the N-terminus, the 434-residue chain is MKNNKLGLRIGIVGGGISGVALALELCRYSHIQVQLFEAAPAFGEVGAGVSFGPNAVRAIVGLGLGEAYLQVADRTSEPWEDVWFEWRRGSDASYLGATIAPGVGQSSVHRADFIDALVTHLPEGIAQFGKRATQVEQQGGEVQVLFTDGTEYRCDLLIGADGIKSALRSHVLEGQGLAPQVPRFSGTCAYRGMVDSLHLREAYRAHGIDEHLVDVPQMYLGLDGHILTFPVRNGGIINVVAFISDRSEPKPTWPADAPWVREASQREMLDAFAGWGDAARALLECIPAPTLWALHDLAELPGYVHGRVVLIGDAAHAMLPHQGAGAGQGLEDAYFLARLLGDTQADAGNLAELLEAYDDLRRPRACRVQQTSWETGELYELRDPVVGANEQLLGENLATRFDWLWNHDLDTDLAEARARLGWEHGGGGALRQG.

Residue 9-38 (RIGIVGGGISGVALALELCRYSHIQVQLFE) coordinates FAD.

Monomer. FAD is required as a cofactor.

The enzyme catalyses salicylate + NADH + O2 + 2 H(+) = catechol + CO2 + NAD(+) + H2O. It functions in the pathway aromatic compound metabolism; naphthalene degradation. The polypeptide is Salicylate hydroxylase (nahG) (Pseudomonas putida (Arthrobacter siderocapsulatus)).